An 86-amino-acid polypeptide reads, in one-letter code: Alpha-toxin TbTx5 (86 aa).

Positions 1 to 19 are cleaved as a signal peptide; sequence MNDFVFLVVACLLTAGTEG. Residues 21 to 82 form the LCN-type CS-alpha/beta domain; the sequence is KDGYPVEGDN…EPTKTNGRCK (62 aa). 4 cysteine pairs are disulfide-bonded: Cys-31/Cys-81, Cys-35/Cys-57, Cys-43/Cys-64, and Cys-47/Cys-66. Pro-83 carries the proline amide modification.

The protein belongs to the long (4 C-C) scorpion toxin superfamily. Sodium channel inhibitor family. Alpha subfamily. Expressed by the venom gland.

The protein resides in the secreted. Functionally, alpha toxins bind voltage-independently at site-3 of sodium channels (Nav) and inhibit the inactivation of the activated channels, thereby blocking neuronal transmission. The chain is Alpha-toxin TbTx5 from Tityus bahiensis (Brazilian scorpion).